A 1330-amino-acid chain; its full sequence is MFFQHSQLQNSDHLLHESMADSNHQSLSPPCANGHRSTISLRDDQGGTFCLICFSNLVSDPRIPTVHVSYALHQLSIAISEPIFLRTLLSSHIHFLVSPLVHALSSIDDAPIAIQIMDMISLLCSVEESSIGEDFVERISDQLSSGALGWSRRQLHMLHCFGVLMSCENININSHIRDKEALVCQLVEGLQLPSEEIRGEILFALYKFSALQFTEQNVDGIEVLSLLCPKLLCLSLEALAKTQRDDVRLNCVALLTILAQQGLLANSHSNSASSMSLDEVDDDPMQTAENVAARPCLNVLFAEAIKGPLLSTDSEVQIKTLDLIFHYISQESTPSKQIQVMVEENVADYIFEILRLSECKDQVVNSCLRVLDLFSLAEHSFRKRLVIGFPSVIRVLHYVGEVPCHPFQIQTLKLISSCISDFPGIASSSQVQEIALVLKKMLERYYSQEMGLFPDAFAIICSVFVSLMKTPSFGETADVLTSLQESLRHSILASLSLPEKDSTQILHAVYLLNEVYVYCTASTSINKTICIELRHCVIDVCTSHLLPWFLSDVNEVNEEATLGIMETFHSILLQNSDIQAKEFAELLVSADWFSFSFGCLGNFCTDNMKQRIYLMLSSLVDILLEQKTGSHIRDALHCLPSDPQDLLFLLGQASSNNQELASCQSAALLIFHTSSIYNDRLADDKLVLASLEQYIILNKTSLICAISDSPALLNLVNLYGLCRSLQNERYQISYSLEAERIIFHLLNEYEWDLGSINIHLESLKWLFQQESISKSLIYQIQKISRNNLIGNEVHNVYGDGRQRSLTYWFAKLISEGDNYAATLLVNLLTQLAEKEEQENDVISILNLMNTIVSIFPTASNNLSMNGIGSVIHRLVSGFSNSSLGTSFRTLLLLVFNILTSVQPAVLMIDESWYAVSIKLLNFLSLRDTAIKQNHEDMVVIGILSLVLYHSSDGALVEASRNIVSNSYLVSAINTVVDVACSKGPALTQCQDETNIGEALAFTLLLYFFSLRSLQIVLAGAVDWQTFFGTSTSLETLPVVCIHCHNLCRLMHFGAPQIKLIASYCLLELLTGLSEQVDIKKEQLQCSSSYLKSMKAVLGGLVFCDDIRVATNSALCLSMILGWEDMEGRTEMLKTSSWYRFIAEEMSVSLAMPCSASSTYVNHHKPAVYLTVAMLRLKNKPVWLRTVFDESCISSMIQNLNGINISREIVILFRELMQAELLNSQQVTKLDRAFQECRKQMHRNGTRDETVEEQVQRKIPSIHDHSEFCNYLVHLMVSNSFGHPSESETYTQKKKQILDEMEQFSELISTREGRVSPIQEETRQMQTERIV.

The interval 1310-1330 (REGRVSPIQEETRQMQTERIV) is disordered.

Interacts with SPO11-1. According to PubMed:28855712, may interact with SPO11-2; this is in contradiction with PubMed:9461215 which claims that it seems to not interact with SPO11-2. Binds to DFO, PRD3 and MTOPVIB. Facilitates an interaction between PRD3 and DFO. As to expression, expressed in flower buds.

The protein resides in the nucleus. In terms of biological role, involved in DNA cleavage that forms the double-strand breaks (DSB) that initiate meiotic recombination. This is Protein PUTATIVE RECOMBINATION INITIATION DEFECT 1 from Arabidopsis thaliana (Mouse-ear cress).